The chain runs to 716 residues: Mitochondrial Rho GTPase 1 (716 aa).

Topologically, residues 1 to 692 (MSPDAIRVVV…VSVDQDDIKH (692 aa)) are cytoplasmic. The Miro 1 domain occupies 3 to 224 (PDAIRVVVCG…FYLCQRAVTH (222 aa)). Residues 58-99 (NDQDHHHHHQSSPSTMKNKRKHNNKRERERERESSINNVQPN) are disordered. Residues 84–91 (ERERERES), 113–115 (DTS), and 167–170 (NKSD) contribute to the GTP site. In terms of domain architecture, EF-hand 1 spans 240-275 (GAIKPLKRIFWLSDTDQDGYLNFEELSELHKKCFGI). Ca(2+)-binding residues include Asp253, Asp255, Asp257, Tyr259, and Glu264. The disordered stretch occupies residues 303-327 (TQTPPQQQHLATSAGTPNGTTTTTS). The EF-hand 2 domain occupies 388 to 423 (TGYKFFVDLFIKFDKDNDGGLNEDELNTLFRSTPGI). Ca(2+) is bound by residues Asp401, Asp403, Asp405, and Glu412. Residues 505–671 (RNVFNCFIVG…FIQLVDAAKT (167 aa)) form the Miro 2 domain. Residues 514–521 (GAPKAGKS), 550–554 (ELRGG), and 620–623 (LKAD) each bind GTP. The chain crosses the membrane as a helical; Anchor for type IV membrane protein span at residues 693 to 713 (IIMTGAAIAVVGLVSIWVLNS). Over 714 to 716 (LRR) the chain is Mitochondrial intermembrane.

It belongs to the mitochondrial Rho GTPase family.

It localises to the mitochondrion outer membrane. In terms of biological role, mitochondrial GTPase involved in mitochondrial trafficking. Probably involved in control of anterograde transport of mitochondria and their subcellular distribution. This chain is Mitochondrial Rho GTPase 1 (GEM1), found in Candida albicans (strain SC5314 / ATCC MYA-2876) (Yeast).